The following is a 302-amino-acid chain: Stanniocalcin-2 (302 aa).

The signal sequence occupies residues 1 to 24; sequence MCAERLGQFMTLALVLATFDPARG. The interval 23–44 is disordered; sequence RGTDATNPPEGPQDRSSQQKGR. N-linked (GlcNAc...) asparagine glycosylation occurs at asparagine 73. Positions 217–302 are disordered; the sequence is KPPTAPPERQ…EQSEYSDIRR (86 aa). A compositionally biased stretch (basic and acidic residues) spans 227–264; the sequence is PQVDRTKLSRAHHGEAGHHLPEPSSRETGRGAKGERGS. Residues serine 250 and serine 251 each carry the phosphoserine; by FAM20C modification. Phosphothreonine; by FAM20C is present on threonine 254.

The protein belongs to the stanniocalcin family. In terms of assembly, homodimer; disulfide-linked. Expressed in a variety of tissues including muscle, heart, pancreas, kidney, spleen, prostate, small intestine, colon and peripheral blood leukocytes.

Its subcellular location is the secreted. Functionally, has an anti-hypocalcemic action on calcium and phosphate homeostasis. The chain is Stanniocalcin-2 (STC2) from Homo sapiens (Human).